The following is a 200-amino-acid chain: Lipopolysaccharide core heptose(II)-phosphate phosphatase (200 aa).

The signal sequence occupies residues 1–25 (MLAFCRSSLKSKKYFIILLALAAIA).

It belongs to the phosphoglycerate mutase family. Ais subfamily.

The protein resides in the periplasm. The protein operates within bacterial outer membrane biogenesis; lipopolysaccharide metabolism. Catalyzes the dephosphorylation of heptose(II) of the outer membrane lipopolysaccharide core. This is Lipopolysaccharide core heptose(II)-phosphate phosphatase from Escherichia coli O17:K52:H18 (strain UMN026 / ExPEC).